Here is a 194-residue protein sequence, read N- to C-terminus: Peptidyl-tRNA hydrolase (194 aa).

Tyr17 contributes to the tRNA binding site. The active-site Proton acceptor is the His22. Residues Tyr68, Asn70, and Asn115 each contribute to the tRNA site.

This sequence belongs to the PTH family. In terms of assembly, monomer.

It is found in the cytoplasm. The enzyme catalyses an N-acyl-L-alpha-aminoacyl-tRNA + H2O = an N-acyl-L-amino acid + a tRNA + H(+). Hydrolyzes ribosome-free peptidyl-tRNAs (with 1 or more amino acids incorporated), which drop off the ribosome during protein synthesis, or as a result of ribosome stalling. Its function is as follows. Catalyzes the release of premature peptidyl moieties from peptidyl-tRNA molecules trapped in stalled 50S ribosomal subunits, and thus maintains levels of free tRNAs and 50S ribosomes. This Pseudoalteromonas atlantica (strain T6c / ATCC BAA-1087) protein is Peptidyl-tRNA hydrolase.